The sequence spans 564 residues: Keratin, type II cytoskeletal 6A (564 aa).

The span at 1-11 (MASTSTTIRSH) shows a compositional bias: low complexity. The disordered stretch occupies residues 1-23 (MASTSTTIRSHSSSRRGFSANSA). Ala-2 is subject to N-acetylalanine. Residues 2–162 (ASTSTTIRSH…DPTIQRVRAE (161 aa)) are head. The tract at residues 163-198 (EREQIKTLNNKFASFIDKVRFLEQQNKVLETKWTLL) is coil 1A. An IF rod domain is found at 163–476 (EREQIKTLNN…KLLEGEECRL (314 aa)). The linker 1 stretch occupies residues 199-217 (QEQGTKTVRQNLEPLFEQY). The tract at residues 218-309 (INNLRRQLDS…ALYDAELSQM (92 aa)) is coil 1B. Positions 310-333 (QTHISDTSVVLSMDNNRNLDLDSI) are linker 12. The coil 2 stretch occupies residues 334 to 472 (IAEVKAQYEE…ATYRKLLEGE (139 aa)). The tail stretch occupies residues 473-564 (ECRLNGEGVG…SSSSRKSYKH (92 aa)).

Belongs to the intermediate filament family. Heterodimer of a type I and a type II keratin. KRT6 isomers associate with KRT16 and/or KRT17. Interacts with TCHP. Expressed in the corneal epithelium (at protein level).

Its function is as follows. Epidermis-specific type I keratin involved in wound healing. Involved in the activation of follicular keratinocytes after wounding, while it does not play a major role in keratinocyte proliferation or migration. Participates in the regulation of epithelial migration by inhibiting the activity of SRC during wound repair. The protein is Keratin, type II cytoskeletal 6A (KRT6A) of Homo sapiens (Human).